A 301-amino-acid polypeptide reads, in one-letter code: uncharacterized protein (301 aa).

Residues Ser-44 and Tyr-107 each act as charge relay system in the active site. Tyr-133 acts as the Proton donor in catalysis. The Schiff-base intermediate with substrate role is filled by Lys-162.

This sequence belongs to the DapA family. Homotetramer.

The protein localises to the cytoplasm. This is an uncharacterized protein from Pyrobaculum aerophilum (strain ATCC 51768 / DSM 7523 / JCM 9630 / CIP 104966 / NBRC 100827 / IM2).